The sequence spans 187 residues: Shikimate kinase (187 aa).

18-23 (GCGKST) is an ATP binding site. A Mg(2+)-binding site is contributed by serine 22. Aspartate 40, arginine 64, and glycine 86 together coordinate substrate. Arginine 128 contacts ATP. Residue arginine 147 participates in substrate binding. Arginine 164 serves as a coordination point for ATP.

The protein belongs to the shikimate kinase family. Monomer. It depends on Mg(2+) as a cofactor.

It localises to the cytoplasm. It catalyses the reaction shikimate + ATP = 3-phosphoshikimate + ADP + H(+). The protein operates within metabolic intermediate biosynthesis; chorismate biosynthesis; chorismate from D-erythrose 4-phosphate and phosphoenolpyruvate: step 5/7. Functionally, catalyzes the specific phosphorylation of the 3-hydroxyl group of shikimic acid using ATP as a cosubstrate. This is Shikimate kinase from Rhodopirellula baltica (strain DSM 10527 / NCIMB 13988 / SH1).